We begin with the raw amino-acid sequence, 818 residues long: MLHSPPPFADGLRPLKVIIIGGGIAGLSLANAFEKAPVPIEYVILEARDTIAPQVGAGIALAPSGCRILDQLGVYDDLEQLVHPVQSSGVCDGQGKSLLPERSDTALLVTARMSYPLGWVERRSVLQVLFKHICHKKSVLTSKRMDRIEHSREQEKPIKVICTDGSFYEGDLVVGADGVHSKTRSEMWRVVEQNICDDFDVQQERRAMMAEYQCMFGISSPIPGLDAGMTDDTLARDVSMVVASGKDGKIFWFLFKRMPQVYHSHEIPRFDSADALKFAEQYFDFPVQSGASNIKFSDLWERRETATLVPLEEADFAHWTAGRIVCLGDSAHKMTPHTGTGGMLALEHAAVLANIICRLVAQGNKLPLTTSQIGTALSQYDEKRRHRRTSAKIKSTGASARMQTLQSLADRLVVRFLLPYAGDIRADQFCDDAIGAEHIEYMPVPARSMTGLMPFNPNRGIGMHESIWPRVLWALPLLGMAVAGLLTMFSVAPFEDAYDFLARRRYREVEIRDKFYHSGLLDDFSRSGVLRFIVSEAHFFYQPFSFFADYGVWYGIMLVESARRANRLNVLSFALLWGMLNMWGIAIFVPIYYFAYYILTPISTFDASDRRLTNLSYTKTILPVLLATHYATFMDAYLSPVRSHRQAAGFLWELFPVWLSLAQAGLARKFLQPSTLKQDRLNNVTRDLPTIRTTILGLCAVSTAVWQYTVWCSEDSLVNIFIPILSSAQGQTFEQLFAEFLKWDQVFFAIPNLFWIILLFADLRAAGLIHAGWLKISFSALGLIIAGGNGTMLGLMWLYREEVLATRRDRGAVVRPIA.

Residues E46, A60, R122, D329, and G342 each coordinate FAD. The next 3 membrane-spanning stretches (helical) occupy residues 471–491, 539–559, and 571–591; these read VLWA…MFSV, FFYQ…IMLV, and LSFA…FVPI. A glycan (N-linked (GlcNAc...) asparagine) is linked at N614. The next 2 membrane-spanning stretches (helical) occupy residues 621 to 641 and 647 to 667; these read ILPV…LSPV and AAGF…AGLA. Residue N683 is glycosylated (N-linked (GlcNAc...) asparagine). Transmembrane regions (helical) follow at residues 743 to 763 and 778 to 798; these read WDQV…FADL and FSAL…LMWL.

The protein belongs to the paxM FAD-dependent monooxygenase family.

It is found in the membrane. In terms of biological role, highly reducing polyketide synthase; part of the gene cluster that mediates the biosynthesis of annullatin D, an alkylated aromatic polyketide with a fused dihydrobenzofuran lactone ring system that exhibits potent agonistic activities toward the cannabinoid receptors. AnuJ does not seem to play a role within the pathway. The annullatin backbone 2-hydroxymethyl-3-pentylphenol is assembled from one acetyl-CoA starter unit and 5 malonyl-CoA elongation units by cooperation of the highly reducing polyketide synthase anuA, the short-chain dehydrogenase anuB and the oxidoreductase anuC, before being hydroxylated at the C-5 alkyl chain by the cytochrome P450 monooxygenase anuE to form (8S)-annullatin E. The prenyltransferase anuH subsequently installs one isoprenyl group at the benzene ring to form (8S)-annullatin J. Enzymatic or nonenzymatic dihydro-benzofuran ring formation between the prenyl and the phenolic hydroxyl groups in (8S)-annullatin J results in two diastereomers (2S,9S)-annullatin H and compound 12. The intermediate (2S,9S)-annullatin H is then converted to (2S,9S)-annullatin D by the FAD-linked oxidoreductase anuG-catalyzed five-member lactone ring formation. The isomer 12 acts as a substrate for the short-chain dehydrogenase anuF and is oxidized to (2R)-annullatin F, which is subsequently acetylated by an acetyltransferase leading to (2R)-annullatin G formation. The remaining enzymes identified within the cluster, anuD, anuI and anuJ, seem not to be involved in annullatin biosynthesis. The sequence is that of FAD-dependent monooxygenase anuJ from Penicillium roqueforti (strain FM164).